We begin with the raw amino-acid sequence, 328 residues long: Tetraacyldisaccharide 4'-kinase (328 aa).

Residue 55–62 (TAGGNGKT) coordinates ATP.

It belongs to the LpxK family.

The enzyme catalyses a lipid A disaccharide + ATP = a lipid IVA + ADP + H(+). The protein operates within glycolipid biosynthesis; lipid IV(A) biosynthesis; lipid IV(A) from (3R)-3-hydroxytetradecanoyl-[acyl-carrier-protein] and UDP-N-acetyl-alpha-D-glucosamine: step 6/6. Its function is as follows. Transfers the gamma-phosphate of ATP to the 4'-position of a tetraacyldisaccharide 1-phosphate intermediate (termed DS-1-P) to form tetraacyldisaccharide 1,4'-bis-phosphate (lipid IVA). The polypeptide is Tetraacyldisaccharide 4'-kinase (Escherichia coli O17:K52:H18 (strain UMN026 / ExPEC)).